The primary structure comprises 120 residues: Ribonuclease P protein component 4 (120 aa).

Cys-68, Cys-71, Cys-97, and Cys-100 together coordinate Zn(2+).

The protein belongs to the eukaryotic/archaeal RNase P protein component 4 family. Consists of a catalytic RNA component and at least 5 protein subunits. Forms a heterodimeric subcomplex with Rnp1. Reconstituted enzyme missing individual protein subunits is suboptimally active, showing each subunit contributes to optimization of activity. Requires Zn(2+) as cofactor.

The protein resides in the cytoplasm. The enzyme catalyses Endonucleolytic cleavage of RNA, removing 5'-extranucleotides from tRNA precursor.. In terms of biological role, part of ribonuclease P, a protein complex that generates mature tRNA molecules by cleaving their 5'-ends. Binds RNase P RNA. In Pyrococcus horikoshii (strain ATCC 700860 / DSM 12428 / JCM 9974 / NBRC 100139 / OT-3), this protein is Ribonuclease P protein component 4.